We begin with the raw amino-acid sequence, 371 residues long: Aminomethyltransferase (371 aa).

Belongs to the GcvT family. In terms of assembly, the glycine cleavage system is composed of four proteins: P, T, L and H.

The catalysed reaction is N(6)-[(R)-S(8)-aminomethyldihydrolipoyl]-L-lysyl-[protein] + (6S)-5,6,7,8-tetrahydrofolate = N(6)-[(R)-dihydrolipoyl]-L-lysyl-[protein] + (6R)-5,10-methylene-5,6,7,8-tetrahydrofolate + NH4(+). Its function is as follows. The glycine cleavage system catalyzes the degradation of glycine. The protein is Aminomethyltransferase of Oceanobacillus iheyensis (strain DSM 14371 / CIP 107618 / JCM 11309 / KCTC 3954 / HTE831).